The following is a 281-amino-acid chain: 2-dehydro-3-deoxyphosphooctonate aldolase (281 aa).

Belongs to the KdsA family.

The protein resides in the cytoplasm. It catalyses the reaction D-arabinose 5-phosphate + phosphoenolpyruvate + H2O = 3-deoxy-alpha-D-manno-2-octulosonate-8-phosphate + phosphate. Its pathway is carbohydrate biosynthesis; 3-deoxy-D-manno-octulosonate biosynthesis; 3-deoxy-D-manno-octulosonate from D-ribulose 5-phosphate: step 2/3. It participates in bacterial outer membrane biogenesis; lipopolysaccharide biosynthesis. This is 2-dehydro-3-deoxyphosphooctonate aldolase from Marinobacter nauticus (strain ATCC 700491 / DSM 11845 / VT8) (Marinobacter aquaeolei).